Consider the following 334-residue polypeptide: MDRPQNVKDLARKVKDNLSFSREVRGMDFEKEWDFMAIMRSFETMGFQGSNLYRAVEEIERMKNSKIFFGCTSNIISSGLRDVIATLVKRRHVHVLVITGGGIEEDIIKAFKPTFCADFRLDGAELRDNGLNRIGNLVIPSENYEHLESWLNNIVNDITEGYTAERPRILTPSSFIRILGERIDDESSILYWAAKNDIPVYSPAVVDGSLGDILSFHPRRKMLKLDIVEDVYRINCETIFCGETAAIILGCGVVKHHILNANLFKNGLEHCVLINNAQEFDGSDAGASLDEAVSWGKVKPGTRGVKVFGDATILFPLLVGATFMRKDKDVPKGE.

NAD(+)-binding positions include 73-77 (SNIIS), 99-101 (TGG), glutamate 105, and aspartate 207. 104 to 105 (EE) contributes to the spermidine binding site. Spermidine contacts are provided by aspartate 212 and histidine 256. An NAD(+)-binding site is contributed by 276–277 (NA). Residues 282–284 (GSD) and 291–297 (EAVSWGK) each bind spermidine. Lysine 297 (nucleophile) is an active-site residue. Residue 310–311 (DA) coordinates NAD(+).

The protein belongs to the deoxyhypusine synthase family. NAD(+) is required as a cofactor.

It carries out the reaction [eIF5A protein]-L-lysine + spermidine = [eIF5A protein]-deoxyhypusine + propane-1,3-diamine. Its pathway is protein modification; eIF5A hypusination. In terms of biological role, catalyzes the NAD-dependent oxidative cleavage of spermidine and the subsequent transfer of the butylamine moiety of spermidine to the epsilon-amino group of a specific lysine residue of the eIF-5A precursor protein to form the intermediate deoxyhypusine residue. This Encephalitozoon cuniculi (strain GB-M1) (Microsporidian parasite) protein is Deoxyhypusine synthase (DYS1).